The primary structure comprises 225 residues: Cell division protein SepF (225 aa).

The interval 21-134 (DEYLDEPEPT…GPLFDEGGPL (114 aa)) is disordered. Composition is skewed to basic and acidic residues over residues 28–54 (EPTR…RDFA), 77–86 (RYESPRHSSR), and 115–127 (TRSD…RGPL).

It belongs to the SepF family. Homodimer. Interacts with FtsZ.

Its subcellular location is the cytoplasm. In terms of biological role, cell division protein that is part of the divisome complex and is recruited early to the Z-ring. Probably stimulates Z-ring formation, perhaps through the cross-linking of FtsZ protofilaments. Its function overlaps with FtsA. In Rhodococcus opacus (strain B4), this protein is Cell division protein SepF.